The chain runs to 284 residues: D-tagatose-1,6-bisphosphate aldolase subunit GatY (284 aa).

Residue Asp82 is the Proton donor of the active site. The Zn(2+) site is built by His83 and His180. Gly181 is a binding site for dihydroxyacetone phosphate. His208 is a binding site for Zn(2+). Residues 209-211 (GAS) and 230-233 (NVAT) contribute to the dihydroxyacetone phosphate site.

Belongs to the class II fructose-bisphosphate aldolase family. TagBP aldolase GatY subfamily. Forms a complex with GatZ. Requires Zn(2+) as cofactor.

The catalysed reaction is D-tagatofuranose 1,6-bisphosphate = D-glyceraldehyde 3-phosphate + dihydroxyacetone phosphate. The protein operates within carbohydrate metabolism; D-tagatose 6-phosphate degradation; D-glyceraldehyde 3-phosphate and glycerone phosphate from D-tagatose 6-phosphate: step 2/2. In terms of biological role, catalytic subunit of the tagatose-1,6-bisphosphate aldolase GatYZ, which catalyzes the reversible aldol condensation of dihydroxyacetone phosphate (DHAP or glycerone-phosphate) with glyceraldehyde 3-phosphate (G3P) to produce tagatose 1,6-bisphosphate (TBP). Requires GatZ subunit for full activity and stability. Is involved in the catabolism of galactitol. This Shigella boydii serotype 4 (strain Sb227) protein is D-tagatose-1,6-bisphosphate aldolase subunit GatY.